The sequence spans 742 residues: MSTNPNTPAPPASRTNPISLRIYKAIGTSFDDVSSREALEIASGMYGPEDPKAKVKAQPEYEELEEDDDTLPKRRTLKGQSAAIARKYLKQDIETCLATGSTKFLEAFAEVDQKLNVLREHMQEMQVRCDQVQSELDQANSGTKFLLERADVLRSQRDSAQLRAHLITLFLSRFTLSNSELTALTSREVTIGQPLFDALDHVEKIRTDCEVLLSGEEGKAQAGLDIMSLTSEQLESGYSKIHRYCQFEFRQFTREAQLEASSVMRQAICRLRDRPALLADAIQTLTSTRQSSILHQFLDALTRGGPGGLPRPIEIHAHDPTRYVGDMLAWVHQTTATEHEFLEGMFGVKEKKRWVGQERGGEEGEEERMASEVLDKDLEGLSRPLKLRIQETIKSQEGIIMTYKIANLLHFYLVTMRKTIGGKAMLVQTLQEIHDQAYIAFYETLDAQGRGLLRFLHPPDATLTPPITLRDAAQILRELLFVYSTSLIDPAERESDADLAKLLDKAVGPCVEMCERMAEMRRGKSGGGEWERDIFMVNSLGYLEHTLEMYDFTTKTLHMLDEKIKTHVESMTFEHHGKLLESCGLAAVMRTIRTRPEDTPLSRLHATSPKSLTSALSKFSTWISTVDPSTSPRLALLTSPRLAVEIHRKALRKIYDAYGEICERVLDKAEGYEFGETMLRRGRDEVGVALGVGEDWELEEDTEEKSMKQKEQQDEDTEDQGEKGIMQEEHKAQDAGNTEDKA.

A disordered region spans residues 692–742; it reads VGEDWELEEDTEEKSMKQKEQQDEDTEDQGEKGIMQEEHKAQDAGNTEDKA. The span at 694 to 703 shows a compositional bias: acidic residues; that stretch reads EDWELEEDTE. The span at 720-742 shows a compositional bias: basic and acidic residues; that stretch reads QGEKGIMQEEHKAQDAGNTEDKA.

The protein belongs to the COG6 family.

The protein resides in the golgi apparatus membrane. Functionally, acts as a component of the peripheral membrane COG complex that is involved in intra-Golgi protein trafficking. COG is located at the cis-Golgi, and regulates tethering of retrograde intra-Golgi vesicles and possibly a number of other membrane trafficking events. The polypeptide is Conserved oligomeric Golgi complex subunit 6 (COG6) (Cryptococcus neoformans var. neoformans serotype D (strain JEC21 / ATCC MYA-565) (Filobasidiella neoformans)).